The primary structure comprises 1140 residues: Protein shank (1140 aa).

ANK repeat units lie at residues 144–174 (QGETPLTLAAGIPNNRAVIVSLIGGGAHVDF), 178–207 (EGQTAMHKAAFLSSFENVKTLIELGASPNY), 211–242 (IGLTPLYYNMLTADSNDQVAEILLREAADIGV), 246–275 (HGNHEIHQACKNGLTKHVEHLLYFGGQIDA), 279–309 (NGNSPLHVCAVNNRPECARVLLFRGADHLAV), and 312–341 (QGQTALHVSHIVGNPGVADVVQAHNPKSSV). Positions 337-412 (PKSSVPYRGT…ITPSEYGTMR (76 aa)) are disordered. The span at 351–364 (TRRRLSSTITRRRS) shows a compositional bias: basic residues. Over residues 388–412 (SAAPSPSPSRSSRTTITPSEYGTMR) the composition is skewed to low complexity. The 94-residue stretch at 436–529 (ILVIPRGVKG…TITLKVITVD (94 aa)) folds into the PDZ domain. Polar residues-rich tracts occupy residues 640–657 (DQESLNGGYSSKKYNSVS) and 687–704 (TSTFEYNCSSRSTPQLSR). Disordered regions lie at residues 640–673 (DQESLNGGYSSKKYNSVSDMKRRKGQRNVVASSA), 687–856 (TSTF…AASA), 875–902 (QLKKAEPRETSAASVSNNNNNNNNSTTD), 961–993 (KDSGYTSSRTSLEPSESEEKDHRPHFSLDHSPN), and 1008–1028 (YGQKDNMSVASSSTASSSSTV). Low complexity-rich tracts occupy residues 761 to 775 (QHQNHQNHQYQQQHP) and 784 to 793 (PQPIQQQQSS). Pro residues-rich tracts occupy residues 794–806 (IPPPPPPPPPPHC) and 823–847 (VPPPPPPLPPISSGAPPPPPPPPPG). The span at 964-974 (GYTSSRTSLEP) shows a compositional bias: polar residues. Residues 977–988 (SEEKDHRPHFSL) show a composition bias toward basic and acidic residues. The span at 1015 to 1028 (SVASSSTASSSSTV) shows a compositional bias: low complexity. An SAM domain is found at 1078–1140 (WSVDDVIGWL…IESALRGLLQ (63 aa)).

This sequence belongs to the SHANK family. In terms of assembly, interacts (via PDZ domain) with egl-19 (via C-terminus). As to expression, expressed in the pharynx, pharyngeal-intestinal valve, intestine, rectal epithelial cells, tail neurons, nerve cord and sperm.

Its subcellular location is the cell projection. It is found in the pseudopodium. The protein localises to the cytoplasmic vesicle. The protein resides in the postsynaptic density. Functionally, scaffold protein that most likely acts in the postsynaptic density (PSD) of excitatory synapses which orchestrates synapse formation and maintenance at neuromuscular junctions. Associates with and trafficks the L-type calcium channel egl-19 to the cell surface of body wall muscles to ensure the function of the calcium channel and therefore maintain the Ca(2+) current density. The maintenance of Ca(2+) also allows for the downstream regulation of Ca(2+)-induced expression of genes such as gem-4. Plays a role in the regulation of the defecation cycle, and this may be in association with the inositol trisphosphate (IP3) receptor itr-1, which in turn mediates periodic calcium release and muscle contractions. Required for normal fertility and pharyngeal pumping. The sequence is that of Protein shank from Caenorhabditis elegans.